The sequence spans 65 residues: MMKASELRAKQVEELKSTLMDLHREAFSLRMQKATGQLSHFHRIRAVRRDIARVNMVLAEKGGKV.

Belongs to the universal ribosomal protein uL29 family.

The polypeptide is Large ribosomal subunit protein uL29 (Methylococcus capsulatus (strain ATCC 33009 / NCIMB 11132 / Bath)).